The following is a 394-amino-acid chain: Aspergillopepsin-1 (394 aa).

A signal peptide spans Met-1–Ala-20. A propeptide spans Ala-21 to Ala-69 (activation peptide). The Peptidase A1 domain occupies Tyr-85–Ala-391. Asp-101 is an active-site residue. 2 O-linked (Man...) serine glycosylation sites follow: Ser-129 and Ser-304. An intrachain disulfide couples Cys-319 to Cys-354.

The protein belongs to the peptidase A1 family. In terms of assembly, monomer.

The protein localises to the secreted. The catalysed reaction is Hydrolysis of proteins with broad specificity. Generally favors hydrophobic residues in P1 and P1', but also accepts Lys in P1, which leads to activation of trypsinogen. Does not clot milk.. Its function is as follows. Secreted aspartic endopeptidase that allows assimilation of proteinaceous substrates. The scissile peptide bond is attacked by a nucleophilic water molecule activated by two aspartic residues in the active site. Shows a broad primary substrate specificity. Favors hydrophobic residues at the P1 and P1' positions, but also accepts a lysine residue in the P1 position, leading to the activation of trypsinogen and chymotrypsinogen A. The chain is Aspergillopepsin-1 (pepA) from Aspergillus phoenicis (Aspergillus saitoi).